Here is a 170-residue protein sequence, read N- to C-terminus: Cytidine diphosphoramidate kinase (170 aa).

The protein belongs to the APS kinase family.

It catalyses the reaction cytidine 5'-diphosphoramidate + ATP = cytidine 3'-phospho-5'-diphosphoramidate + ADP + H(+). It participates in capsule biogenesis; capsule polysaccharide biosynthesis. Involved in the biosynthesis of the O-methyl phosphoramidate (MeOPN) group found on the capsular polysaccharide (CPS) of C.jejuni. Catalyzes the ATP-dependent phosphorylation of cytidine diphosphoramidate (CDP-NH(2)) to form cytidine 3'-phosphate 5'-diphosphoramidate. Can also use other substrates such as the corresponding adenine and uridine diphosphoramidate derivatives or cytidine diphosphoramidate analogs, with lower efficiency. The protein is Cytidine diphosphoramidate kinase of Campylobacter jejuni subsp. jejuni serotype O:2 (strain ATCC 700819 / NCTC 11168).